A 429-amino-acid chain; its full sequence is MRAELNNGLIDFLKASPTPFHATATLVQHFEAAGFQRLDERDTWAIETGGRYFVTRNDSSIVAFRMGRQSPLTGGIRMVGAHTDSPCLRVKPQPELQRQGFWQLGVEVYGGALLAPWFDRDLSLAGRVTFRRDGKVESQLIDFKLPIAVIPNLAIHLNRTANEGWAINAQNELPPILAQVAGDERADFRALLTDQLAREHGLNADVVLDYELSFYDTQSAAVVGLNGDFLAGARLDNLLSCYAGMQALLNSESDETALLVCTDHEEVGSSSTCGADGAMLEQIVQRLLPSSEDYVRTIQKSLLISADNAHGIHPNYAEKHDANHGPKLNAGPVIKVNSNQRYATNSETAGFFRHLCMAEEVPVQSFVVRSDMACGSTIGPITASHLGIRTVDIGLPTFAMHSIRELAGSHDLAHLVKVLSAFYASHELP.

Zn(2+) contacts are provided by His-82, His-156, and His-401.

Belongs to the peptidase M18 family. The cofactor is Zn(2+).

This Pseudomonas savastanoi pv. phaseolicola (strain 1448A / Race 6) (Pseudomonas syringae pv. phaseolicola (strain 1448A / Race 6)) protein is Probable M18 family aminopeptidase 2.